The sequence spans 418 residues: Actin-related protein 3 (418 aa).

Position 2 is an N-acetylalanine (Ala-2). 4 positions are modified to N6-acetyllysine: Lys-240, Lys-244, Lys-251, and Lys-254.

The protein belongs to the actin family. ARP3 subfamily. In terms of assembly, component of the Arp2/3 complex composed of ACTR2/ARP2, ACTR3/ARP3, ARPC1B/p41-ARC, ARPC2/p34-ARC, ARPC3/p21-ARC, ARPC4/p20-ARC and ARPC5/p16-ARC. Interacts with WHDC1. Interacts weakly with MEFV. Interacts with AVIL. As to quaternary structure, (Microbial infection) Interacts with bacterium B.thailandensis BimA.

The protein localises to the cytoplasm. Its subcellular location is the cytoskeleton. The protein resides in the cell projection. It localises to the nucleus. Functionally, ATP-binding component of the Arp2/3 complex, a multiprotein complex that mediates actin polymerization upon stimulation by nucleation-promoting factor (NPF). The Arp2/3 complex mediates the formation of branched actin networks in the cytoplasm, providing the force for cell motility. Seems to contact the pointed end of the daughter actin filament. In podocytes, required for the formation of lamellipodia downstream of AVIL and PLCE1 regulation. In addition to its role in the cytoplasmic cytoskeleton, the Arp2/3 complex also promotes actin polymerization in the nucleus, thereby regulating gene transcription and repair of damaged DNA. The Arp2/3 complex promotes homologous recombination (HR) repair in response to DNA damage by promoting nuclear actin polymerization, leading to drive motility of double-strand breaks (DSBs). Plays a role in ciliogenesis. In Mus musculus (Mouse), this protein is Actin-related protein 3 (Actr3).